A 325-amino-acid chain; its full sequence is Olfactory receptor 5T18 (325 aa).

Over 1-22 (MRNITEATFFVLKGLTDNNELQ) the chain is Extracellular. Asn3 is a glycosylation site (N-linked (GlcNAc...) asparagine). The next 2 helical transmembrane spans lie at 23 to 43 (IILF…NVGL) and 44 to 64 (IILV…LSVL). Topologically, residues 65–97 (SSVDACYSTDITPNMLVGFMSKSKIISFYGCAT) are extracellular. A disulfide bridge links Cys95 with Cys187. Residues 98-118 (QMFLAVTFGTTECFLLAAMAY) traverse the membrane as a helical segment. The Cytoplasmic portion of the chain corresponds to 119–139 (DRYVAIHDPLLYAVSMSPRVY). The chain crosses the membrane as a helical span at residues 140 to 160 (IPLIIASYAGGIVHAIIHTVA). Residues 161 to 194 (TFSLSFCRSNEVKHIFCDIPPLLAISCSETYVNE) are Extracellular-facing. The helical transmembrane segment at 195-215 (LLLFFFVSFIELVTILIVLVS) threads the bilayer. Over 216 to 234 (YAFILLSILKMNSSEGRRK) the chain is Cytoplasmic. Residues 235–255 (VFSTCGAHLTAVSIYYGTILF) form a helical membrane-spanning segment. Residues 256-269 (MYVRPSSNYSLEHD) are Extracellular-facing. Residues 270-290 (MIVSTFYTIGIPMLNPIIYSL) form a helical membrane-spanning segment. Residues 291–325 (RNKDVKEAMKRVLRKKINIKHRIKKLNDFSVFLMP) are Cytoplasmic-facing.

Belongs to the G-protein coupled receptor 1 family.

The protein resides in the cell membrane. Its function is as follows. Potential odorant receptor. This Mus musculus (Mouse) protein is Olfactory receptor 5T18.